Reading from the N-terminus, the 143-residue chain is Transcriptional regulator MraZ (143 aa).

SpoVT-AbrB domains are found at residues 5–47 (EYHH…PIEE) and 76–119 (AMES…SAER).

The protein belongs to the MraZ family. Forms oligomers.

It localises to the cytoplasm. The protein resides in the nucleoid. This is Transcriptional regulator MraZ from Lactobacillus gasseri (strain ATCC 33323 / DSM 20243 / BCRC 14619 / CIP 102991 / JCM 1131 / KCTC 3163 / NCIMB 11718 / NCTC 13722 / AM63).